Consider the following 91-residue polypeptide: Small ribosomal subunit protein bS20 (91 aa).

Belongs to the bacterial ribosomal protein bS20 family.

Functionally, binds directly to 16S ribosomal RNA. This chain is Small ribosomal subunit protein bS20, found in Mycoplasma mobile (strain ATCC 43663 / 163K / NCTC 11711) (Mesomycoplasma mobile).